The chain runs to 690 residues: MKLLLLSALLGCLATAYAAPAEGIVKWCVKSEQELRKCHDLAAKVAEFSCVRKDGSFECIQAIKGGEADAITLDGGDIYTAGLTNYGLQPIIAEDYGEDSDTCYYAVAVAKKGTAFGFKTLRGKKSCHTGLGKSAGWNIPIGTLVTESQIRWAGIEDRPVESAVSDFFNASCAPGATMGSKLCQLCKGDCSRSHKEPYYDYAGAFQCLKDGAGDVAFIKPLAVPAAEKASYELLCKDGTRASIDSYKTCHLARVPAHAVVSRKDPELANRIYNKLVAVKDFNLFSSDGYAAKNLMFKDSAQKLVQLPTTTDSFLYLGAEYMSTIRSLKKSQATGASSRAIKWCAVGHAEKGKCDTWTINSFADGESKISCQDAPTVEECIKKIMRKEADAIAVDGGEVYTAGKCGLVPVMVEQYDADLCSAPGEASSYYAVAVAKKGSGLTWKTLKGKRSCHTGLGRTAGWNIPMGLIHQETNDCDFTKYFSKGCAPGSEVGSPFCAQCKGSGKAVGDEYRCKARSEEQYYGYTGAFRCLVEDAGDVAFIKHTIVPESTDGNGPDWAKDLKSSDFELLCQDGTTQPVTKFSECHLAKVPAHAVITRPETRGDVVSILLELQAKFGSSGSDSSFRMFQSSVEKNLLFKDSTKCLQEIPKGTKYQDFLGKEYMIAMQSLRKCSDSTSDLEKACTFHSCQQKE.

Residues M1 to A18 form the signal peptide. Transferrin-like domains follow at residues V25–K329 and I340–K669. An intrachain disulfide couples C28 to C50. D74 and Y104 together coordinate Fe(3+). 3 disulfide bridges follow: C127/C207, C172/C186, and C235/C249. The hydrogencarbonate site is built by T129, S134, G136, and W137. N169 carries N-linked (GlcNAc...) asparagine glycosylation. Residue Y201 coordinates Fe(3+). Residue H257 participates in Fe(3+) binding. Cystine bridges form between C343–C379 and C353–C370. The Fe(3+) site is built by D394 and Y428. Cystine bridges form between C404-C681, C419-C642, C451-C529, C475-C670, C485-C499, C496-C512, and C569-C583. T453, R457, A459, and G460 together coordinate hydrogencarbonate. Residue Y523 participates in Fe(3+) binding. H591 contacts Fe(3+).

This sequence belongs to the transferrin family. Monomer. As to expression, abundant in liver and serum with smaller amounts found in the stomach and kidney.

It localises to the secreted. Its function is as follows. Transferrins are iron binding transport proteins which can bind two Fe(3+) ions in association with the binding of an anion, usually bicarbonate. It is responsible for the transport of iron from sites of absorption and heme degradation to those of storage and utilization. Serum transferrin may also have a further role in stimulating cell proliferation. The chain is Serotransferrin-1 (tf1) from Salmo salar (Atlantic salmon).